A 64-amino-acid polypeptide reads, in one-letter code: Large ribosomal subunit protein bL32 (64 aa).

The span at 1-16 shows a compositional bias: basic residues; the sequence is MAVQKSRKTRSRRGMR. A disordered region spans residues 1-64; sequence MAVQKSRKTR…TPKESYEDEE (64 aa).

Belongs to the bacterial ribosomal protein bL32 family.

This is Large ribosomal subunit protein bL32 from Coxiella burnetii (strain CbuK_Q154) (Coxiella burnetii (strain Q154)).